Here is a 125-residue protein sequence, read N- to C-terminus: Thioredoxin H-type (125 aa).

A Thioredoxin domain is found at 2-112 (AEGNVFACHS…LERKVAALAA (111 aa)). Active-site nucleophile residues include cysteine 38 and cysteine 41. Cysteines 38 and 41 form a disulfide.

This sequence belongs to the thioredoxin family. Plant H-type subfamily.

The protein localises to the cytoplasm. Functionally, participates in various redox reactions through the reversible oxidation of the active center dithiol to a disulfide. The H form is known to activate a number of cytosolic enzymes. The protein is Thioredoxin H-type (SB09) of Picea mariana (Black spruce).